A 53-amino-acid polypeptide reads, in one-letter code: Membrane antigen containing repeating peptides (53 aa).

A run of 6 repeats spans residues 1-10, 11-20, 21-30, 31-40, 41-50, and 51-53. Residues 1–53 are 6 X 10 AA tandem repeats; the sequence is EAEEAARLQAEAEEAARQQAEAEEAARLQAEAEEAARLQAEAEEAARLQAEAE. A disordered region spans residues 1 to 53; it reads EAEEAARLQAEAEEAARQQAEAEEAARLQAEAEEAARLQAEAEEAARLQAEAE.

The protein localises to the membrane. This Leishmania major protein is Membrane antigen containing repeating peptides.